A 216-amino-acid polypeptide reads, in one-letter code: Probable transaldolase (216 aa).

The Schiff-base intermediate with substrate role is filled by lysine 83.

It belongs to the transaldolase family. Type 3B subfamily.

The protein resides in the cytoplasm. It carries out the reaction D-sedoheptulose 7-phosphate + D-glyceraldehyde 3-phosphate = D-erythrose 4-phosphate + beta-D-fructose 6-phosphate. It functions in the pathway carbohydrate degradation; pentose phosphate pathway; D-glyceraldehyde 3-phosphate and beta-D-fructose 6-phosphate from D-ribose 5-phosphate and D-xylulose 5-phosphate (non-oxidative stage): step 2/3. In terms of biological role, transaldolase is important for the balance of metabolites in the pentose-phosphate pathway. The chain is Probable transaldolase from Methanococcus aeolicus (strain ATCC BAA-1280 / DSM 17508 / OCM 812 / Nankai-3).